We begin with the raw amino-acid sequence, 179 residues long: Large ribosomal subunit protein uL5 (179 aa).

Belongs to the universal ribosomal protein uL5 family. As to quaternary structure, part of the 50S ribosomal subunit; part of the 5S rRNA/L5/L18/L25 subcomplex. Contacts the 5S rRNA and the P site tRNA. Forms a bridge to the 30S subunit in the 70S ribosome.

Its function is as follows. This is one of the proteins that bind and probably mediate the attachment of the 5S RNA into the large ribosomal subunit, where it forms part of the central protuberance. In the 70S ribosome it contacts protein S13 of the 30S subunit (bridge B1b), connecting the 2 subunits; this bridge is implicated in subunit movement. Contacts the P site tRNA; the 5S rRNA and some of its associated proteins might help stabilize positioning of ribosome-bound tRNAs. The protein is Large ribosomal subunit protein uL5 of Photorhabdus laumondii subsp. laumondii (strain DSM 15139 / CIP 105565 / TT01) (Photorhabdus luminescens subsp. laumondii).